We begin with the raw amino-acid sequence, 37 residues long: Large ribosomal subunit protein bL36 (37 aa).

Belongs to the bacterial ribosomal protein bL36 family.

The protein is Large ribosomal subunit protein bL36 of Thermus thermophilus (strain ATCC BAA-163 / DSM 7039 / HB27).